A 2467-amino-acid chain; its full sequence is Transcription factor TFIIIB component B'' homolog (2467 aa).

Disordered stretches follow at residues Met-1–Ile-145 and Leu-159–Gly-243. Residues Met-1–Tyr-301 are interaction with ZBTB43. A compositionally biased stretch (low complexity) spans Ala-81–Ser-92. The span at Ser-99–Leu-118 shows a compositional bias: polar residues. 2 stretches are compositionally biased toward basic and acidic residues: residues Ala-133–Arg-144 and Arg-177–Met-186. Residues Arg-144–Arg-177 adopt a coiled-coil conformation. Acidic residues predominate over residues Asn-231–Asp-242. The Myb-like domain maps to Arg-297 to Glu-347. The interval Ala-357 to Gly-472 is required for phosphorylation by CSNK2A1. 16 disordered regions span residues Glu-380 to Lys-513, Ser-576 to Ala-720, Pro-748 to Trp-844, Leu-866 to Met-893, Leu-971 to Ile-1200, Leu-1231 to Ala-1270, Asp-1318 to Ile-1388, Leu-1409 to Gln-1448, Lys-1527 to Leu-1561, Ile-1592 to Lys-1706, Ile-1902 to Arg-1926, Ile-1977 to Gly-2014, Leu-2058 to Pro-2083, Leu-2179 to Ser-2206, Gly-2260 to Leu-2290, and Leu-2304 to Thr-2449. The stretch at Glu-458 to Leu-487 forms a coiled coil. The span at Ala-649–Met-660 shows a compositional bias: basic and acidic residues. Basic residues predominate over residues Arg-809–Ile-824. Basic and acidic residues-rich tracts occupy residues Lys-873–Arg-884, Thr-992–Thr-1002, Thr-1009–Met-1041, Glu-1089–Thr-1098, Glu-1112–Ser-1130, and Asp-1150–Ser-1170. Composition is skewed to polar residues over residues Leu-1180–Ile-1200, Asp-1251–Leu-1265, Asp-1318–Val-1330, and Pro-1364–Asn-1382. Basic and acidic residues-rich tracts occupy residues Gln-1429 to Gln-1448, Arg-1536 to Leu-1561, and Ile-1592 to Asp-1603. Polar residues-rich tracts occupy residues Glu-1621–Pro-1642 and Tyr-1650–Ser-1665. The span at Arg-1688–Thr-1697 shows a compositional bias: basic residues. Basic and acidic residues-rich tracts occupy residues Ile-1902–Ala-1913, Ile-1977–His-1996, and Ala-2068–Lys-2078. A compositionally biased stretch (low complexity) spans Pro-2185–Pro-2199. 3 stretches are compositionally biased toward polar residues: residues Phe-2262–Lys-2273, Pro-2319–Lys-2334, and Thr-2414–Gln-2429.

In terms of assembly, component of TFIIIB complex. The TFIIIB complex has two activities, alpha and beta. The TFIIIB-alpha and TFIIIB-beta activities are required for transcription of genes with TFIIIC-bound internal promoters and PSE transcription factor-bound external promoters, respectively. The TFIIIB-alpha activity complex is composed of TBP, BDP1, and a complex containing both BRF2 and at least four stably associated proteins; YY1 facilitates the formation of TFIIIB-alpha activity complex. The TFIIIB-beta activity complex is composed of TBP, BDP1, and BRF1. Interacts with BRF1; this interaction diminishes during mitosis resulting in the release of BDP1 from chromosomal templates. Component of TFIIIC complex. The TFIIIC complex has two activities, C1 and C2. The TFIIIC2 activity complex is only required for transcription of the 'classical' pol III genes whereas the TFIIIC1 activity complex is required for transcription of all pol III genes. The TFIIIC1 activity complex is composed at least of BDP1. Interacts with ZBTB43. Phosphorylated by CSNK2A1 during mitosis, resulting in its release from chromatin and suppression of polymerase III transcription. As to expression, expressed in the cochlea, particularly in the spiral ligament, the capillaries of the stria vascularis and the basilar membrane.

The protein resides in the nucleus. Its function is as follows. General activator of RNA polymerase III transcription. Requires for transcription from all three types of polymerase III promoters. Requires for transcription of genes with internal promoter elements and with promoter elements upstream of the initiation site. This chain is Transcription factor TFIIIB component B'' homolog (Bdp1), found in Mus musculus (Mouse).